Consider the following 597-residue polypeptide: MVGVPLQWFLKDDFDGKEILWNLFRELVYYRELKADYAYYCNRVSFFEDAAQGMRRLMYEAVFSREARDEIRVRAFVQHYCHTEVASLFYLFDAVYAFHYVRNRAPYYTTPEGSALLASLYQKERGVYWEHTETALHLQFAYALAERVLFHDMPKGCNRACIARDPVVQEVLRTLVLGTEMSNFIHSEFFPLSGEVVPTKHRDRIVSVFLLEHFVRLWHLSVANITFELKNITDRSYDPFRNERAFEYTKSNLHAVHSRDGQQELKKREDVFESCTTQFDERFSISPKERKEFARLLRTTHRLRIDMRSFWKSLIGKSVQWIDCYEGKCPKGRLNVGDFVSVFPDFQEFRGRDQRYKLRVYDRVYEVRACTLRPAQIEVSFVVDNSGSMNKEKIASAREALAVSMLSLKDFGEYSDMLAAGRRERTTIHSEVYYFGSSFIKVKSFGKSKSKDFNSAQLIKASVNLDGRFGGTNDAEVLKHILADVERRRARVSSDTSFVKVVLVITDGCSSYPHESRRTIEELRRRGVMIFGFQIGLMSPEETALFHDVWNSTEELGLLLGERLEYLPRELLRTLRVVLSKVHRLSSGERLHAQRVW.

The VWFA domain occupies 378-575; the sequence is EVSFVVDNSG…YLPRELLRTL (198 aa).

This is an uncharacterized protein from Treponema pallidum (strain Nichols).